Reading from the N-terminus, the 827-residue chain is Leucine--tRNA ligase (827 aa).

Residues 46-56 (PYPSGRIHMGH) carry the 'HIGH' region motif. The short motif at 585–589 (KMSKS) is the 'KMSKS' region element. ATP is bound at residue lysine 588.

It belongs to the class-I aminoacyl-tRNA synthetase family.

Its subcellular location is the cytoplasm. It catalyses the reaction tRNA(Leu) + L-leucine + ATP = L-leucyl-tRNA(Leu) + AMP + diphosphate. This chain is Leucine--tRNA ligase, found in Desulfotalea psychrophila (strain LSv54 / DSM 12343).